We begin with the raw amino-acid sequence, 204 residues long: Lipoprotein signal peptidase (204 aa).

The tract at residues 1-42 (MAEAERIIGTPDIPDAAGEGQERPDADPEREQQEQEQAPERT) is disordered. Over residues 20–42 (GQERPDADPEREQQEQEQAPERT) the composition is skewed to basic and acidic residues. 3 helical membrane-spanning segments follow: residues 50 to 70 (VLFA…MLVV), 100 to 120 (FGEA…VVIA), and 126 to 146 (LHSL…LGNL). Residues aspartate 163 and aspartate 177 contribute to the active site. The helical transmembrane segment at 170-190 (FAVFNLADSAIVCGGILIVIL) threads the bilayer.

This sequence belongs to the peptidase A8 family.

It localises to the cell membrane. The catalysed reaction is Release of signal peptides from bacterial membrane prolipoproteins. Hydrolyzes -Xaa-Yaa-Zaa-|-(S,diacylglyceryl)Cys-, in which Xaa is hydrophobic (preferably Leu), and Yaa (Ala or Ser) and Zaa (Gly or Ala) have small, neutral side chains.. Its pathway is protein modification; lipoprotein biosynthesis (signal peptide cleavage). In terms of biological role, this protein specifically catalyzes the removal of signal peptides from prolipoproteins. This Streptomyces coelicolor (strain ATCC BAA-471 / A3(2) / M145) protein is Lipoprotein signal peptidase.